A 267-amino-acid chain; its full sequence is Undecaprenyl-diphosphatase (267 aa).

7 consecutive transmembrane segments (helical) span residues 1-21, 40-60, 85-105, 111-131, 190-210, 219-239, and 245-265; these read MSLFHLILVALIQGITEFLPV, GQVIDVAVHVGTLGAVVLYFW, LAMGLIVATIPTVLAGAALHF, ALRSITVIGWTMLLFGLLLWW, MLMSIPTIIASGVLLGADVAV, DGAIAAAFAFVSALLALSLMM, and VSFTPYVIYRLALGLVLLGIA.

Belongs to the UppP family.

Its subcellular location is the cell inner membrane. The catalysed reaction is di-trans,octa-cis-undecaprenyl diphosphate + H2O = di-trans,octa-cis-undecaprenyl phosphate + phosphate + H(+). In terms of biological role, catalyzes the dephosphorylation of undecaprenyl diphosphate (UPP). Confers resistance to bacitracin. The sequence is that of Undecaprenyl-diphosphatase from Ruegeria pomeroyi (strain ATCC 700808 / DSM 15171 / DSS-3) (Silicibacter pomeroyi).